The sequence spans 212 residues: Calaxin (212 aa).

3 EF-hand domains span residues 65 to 100, 101 to 136, and 146 to 181; these read TDDM…FLRG, TLEE…SLLK, and GIKD…ETLL. D78, D80, D82, C84, E89, D114, N116, D118, E125, D159, D161, D163, K165, and D170 together coordinate Ca(2+).

Component of the outer dynein arm-docking complex along with ODAD1, ODAD2, ODAD3 and ODAD4. In terms of tissue distribution, expressed in trachea multiciliated cells.

It localises to the cytoplasm. The protein resides in the cytoskeleton. It is found in the cilium axoneme. Its subcellular location is the cell projection. The protein localises to the cilium. It localises to the flagellum. Component of the outer dynein arm-docking complex (ODA-DC) that mediates outer dynein arms (ODA) binding onto the doublet microtubule. Seems to regulate the assembly of both ODAs and their axonemal docking complex onto ciliary microtubules. Regulates ciliary and flagellar motility and is required for cilia-driven determination of body laterality. The protein is Calaxin (CLXN) of Bos taurus (Bovine).